Consider the following 102-residue polypeptide: Defensin-like protein 285 (102 aa).

Positions 1–28 are cleaved as a signal peptide; the sequence is MTNLYFKTAFLLSLLLLSFSYQSKLIEA. 4 disulfides stabilise this stretch: cysteine 39-cysteine 100, cysteine 64-cysteine 83, cysteine 70-cysteine 88, and cysteine 75-cysteine 90.

Belongs to the DEFL family.

The protein resides in the secreted. The sequence is that of Defensin-like protein 285 from Arabidopsis thaliana (Mouse-ear cress).